Consider the following 284-residue polypeptide: RNase adapter protein RapZ (284 aa).

8 to 15 (GRSGSGKS) lines the ATP pocket. A GTP-binding site is contributed by 56 to 59 (DVRN). The segment at 266–284 (RSRGKNVQSRHRTLEKRKS) is RNA-binding.

It belongs to the RapZ-like family. RapZ subfamily. As to quaternary structure, homotrimer.

Functionally, modulates the synthesis of GlmS, by affecting the processing and stability of the regulatory small RNA GlmZ. When glucosamine-6-phosphate (GlcN6P) concentrations are high in the cell, RapZ binds GlmZ and targets it to cleavage by RNase E. Consequently, GlmZ is inactivated and unable to activate GlmS synthesis. Under low GlcN6P concentrations, RapZ is sequestered and inactivated by an other regulatory small RNA, GlmY, preventing GlmZ degradation and leading to synthesis of GlmS. In Klebsiella pneumoniae (strain 342), this protein is RNase adapter protein RapZ.